The sequence spans 89 residues: Small ribosomal subunit protein uS15 (89 aa).

Residues 1–23 form a disordered region; the sequence is MTLNTEAKQKIINKHQTHGTDTG.

The protein belongs to the universal ribosomal protein uS15 family. As to quaternary structure, part of the 30S ribosomal subunit. Forms a bridge to the 50S subunit in the 70S ribosome, contacting the 23S rRNA.

One of the primary rRNA binding proteins, it binds directly to 16S rRNA where it helps nucleate assembly of the platform of the 30S subunit by binding and bridging several RNA helices of the 16S rRNA. Its function is as follows. Forms an intersubunit bridge (bridge B4) with the 23S rRNA of the 50S subunit in the ribosome. In Prochlorococcus marinus (strain SARG / CCMP1375 / SS120), this protein is Small ribosomal subunit protein uS15.